We begin with the raw amino-acid sequence, 97 residues long: Large ribosomal subunit protein bL27 (97 aa).

Positions 1–12 are excised as a propeptide; the sequence is MLKMNLANLQLF. Residues 14 to 38 are disordered; that stretch reads HKKGGGSTSNGRDSESKRLGAKAAD.

Belongs to the bacterial ribosomal protein bL27 family. In terms of processing, the N-terminus is cleaved by ribosomal processing cysteine protease Prp.

The protein is Large ribosomal subunit protein bL27 of Streptococcus mutans serotype c (strain ATCC 700610 / UA159).